Reading from the N-terminus, the 307-residue chain is Dimethyladenosine transferase (307 aa).

The S-adenosyl-L-methionine site is built by H31, L33, G58, E79, D107, and N122.

Belongs to the class I-like SAM-binding methyltransferase superfamily. rRNA adenine N(6)-methyltransferase family.

It catalyses the reaction adenosine(1779)/adenosine(1780) in 18S rRNA + 4 S-adenosyl-L-methionine = N(6)-dimethyladenosine(1779)/N(6)-dimethyladenosine(1780) in 18S rRNA + 4 S-adenosyl-L-homocysteine + 4 H(+). In terms of biological role, specifically dimethylates two adjacent adenosines in the loop of a conserved hairpin near the 3'-end of 18S rRNA in the 40S particle. The sequence is that of Dimethyladenosine transferase (dim1) from Schizosaccharomyces pombe (strain 972 / ATCC 24843) (Fission yeast).